Consider the following 208-residue polypeptide: Small ribosomal subunit protein uS4 (208 aa).

The 65-residue stretch at 95–159 (TIIDNIVYRA…LKKLIGSNIE (65 aa)) folds into the S4 RNA-binding domain.

This sequence belongs to the universal ribosomal protein uS4 family. In terms of assembly, part of the 30S ribosomal subunit. Contacts protein S5. The interaction surface between S4 and S5 is involved in control of translational fidelity.

One of the primary rRNA binding proteins, it binds directly to 16S rRNA where it nucleates assembly of the body of the 30S subunit. Its function is as follows. With S5 and S12 plays an important role in translational accuracy. In Borreliella afzelii (strain PKo) (Borrelia afzelii), this protein is Small ribosomal subunit protein uS4.